Consider the following 273-residue polypeptide: Homeobox protein ceh-43 (273 aa).

Disordered stretches follow at residues 47-79 (NGAT…EEAF) and 153-204 (RRSK…LVSS). Residues 102-161 (MRKPRTIYNSSQLQMLQKKFQKTQYLALPDRAALAHELGLSQTQVKIWFQNRRSKQKKQK) constitute a DNA-binding region (homeobox).

Belongs to the distal-less homeobox family. Predominantly expressed in the head hypdodermis, neuronal support cells and CAN neurons.

Its subcellular location is the nucleus. Functionally, probable transcription factor. Binds to the sequence motif 5'-ATAAT-3' in regulatory elements. Required for development of the anterior hypodermis during embryonic morphogenesis for cell adhesion; also affects embryonic and larval viability. Modulates and maintains dopaminergic neuron differentiation. May activate dopamine pathway genes in concert with ETS domain-containing protein ast-1, and homeobox proteins ceh-40 and ceh-20. The polypeptide is Homeobox protein ceh-43 (ceh-43) (Caenorhabditis elegans).